The sequence spans 191 residues: MSPSLHPLLDNGITKGDPNFPGGNLYCKCSSDKVVVKLASNVAHNHACGCSKCWKPAGSLFSIVGVVPRDAVSVTEHAEKLSIVDASAAIQRYACKGCGVHMFGRIEKDHPFKGLDFVHAELSDQKGWQEPQFAGFVSSIIEQGFHPKGMEEVRSKFHSLGLETYDALSPALMDLIATFTAQRAGVLSANL.

Residues 20–166 enclose the CENP-V/GFA domain; it reads FPGGNLYCKC…FHSLGLETYD (147 aa). The Zn(2+) site is built by Cys-27, Cys-29, Cys-48, Cys-50, Cys-53, Cys-95, and Cys-98.

This sequence belongs to the Gfa family. Requires Zn(2+) as cofactor.

It catalyses the reaction S-(hydroxymethyl)glutathione = glutathione + formaldehyde. The protein operates within one-carbon metabolism; formaldehyde degradation; formate from formaldehyde (glutathione route): step 1/3. Functionally, catalyzes the condensation of formaldehyde and glutathione to S-hydroxymethylglutathione. The sequence is that of Putative glutathione-dependent formaldehyde-activating enzyme from Aspergillus niger (strain ATCC MYA-4892 / CBS 513.88 / FGSC A1513).